The sequence spans 562 residues: Putative transport protein YE1478 (562 aa).

6 consecutive transmembrane segments (helical) span residues 8–28 (LLNG…LCLG), 32–52 (LGPI…LLGQ), 66–86 (FMLF…SIFF), 94–114 (MLAL…GKLF), 118–138 (IGLT…LVGA), and 158–178 (NLSL…ILGA). RCK C-terminal domains are found at residues 202–288 (LDTD…SFRN) and 290–373 (KEVF…KIGF). The next 5 membrane-spanning stretches (helical) occupy residues 383 to 403 (LLAF…TFQF), 406 to 426 (FSFG…LGFL), 447 to 467 (FGLM…INSS), 475 to 495 (MLIS…IFGA), and 541 to 561 (IANV…PGIL).

It belongs to the AAE transporter (TC 2.A.81) family. YbjL subfamily.

It is found in the cell membrane. The sequence is that of Putative transport protein YE1478 from Yersinia enterocolitica serotype O:8 / biotype 1B (strain NCTC 13174 / 8081).